We begin with the raw amino-acid sequence, 329 residues long: Replication factor C small subunit 1 (329 aa).

An ATP-binding site is contributed by 44 to 51 (GPPGTGKT).

It belongs to the activator 1 small subunits family. RfcS subfamily. In terms of assembly, heteromultimer composed of small subunits (RfcS) and large subunits (RfcL).

Its function is as follows. Part of the RFC clamp loader complex which loads the PCNA sliding clamp onto DNA. The sequence is that of Replication factor C small subunit 1 from Pyrobaculum islandicum (strain DSM 4184 / JCM 9189 / GEO3).